The primary structure comprises 2028 residues: Phosphatidylinositol 4-kinase alpha 1 (2028 aa).

Positions 184-241 (PASPKEQRQQNSANSETDTSSSQGSPISTNRYPSGKTEMASPGDEVASHGSNLSSKSS) are disordered. A compositionally biased stretch (polar residues) spans 192 to 215 (QQNSANSETDTSSSQGSPISTNRY). A compositionally biased stretch (low complexity) spans 231–241 (SHGSNLSSKSS). Positions 1483-1659 (TEYAKTAFSV…NAAFQEILPQ (177 aa)) constitute a PIK helical domain. The tract at residues 1660–1773 (VRQHIIDGFS…VKPQACIFKV (114 aa)) is pleckstrin homology (PH) domain conferring phosphoinositide binding specificity. In terms of domain architecture, PI3K/PI4K catalytic spans 1734-2012 (VDSGIPLQSA…VCTDAYNKWT (279 aa)). The segment at 1740–1746 (LQSAAKV) is G-loop. Residues 1876–1884 (QPKDRHNGN) are catalytic loop. Residues 1895 to 1920 (HIDFGFILETSPGGNMRFESAHFKLS) form an activation loop region.

This sequence belongs to the PI3/PI4-kinase family. Type III PI4K subfamily. As to quaternary structure, interacts in vitro with actin filaments via its PH domain. In terms of tissue distribution, present in leaves and inflorescences.

It is found in the membrane. The protein resides in the cytoplasm. The protein localises to the perinuclear region. The catalysed reaction is a 1,2-diacyl-sn-glycero-3-phospho-(1D-myo-inositol) + ATP = a 1,2-diacyl-sn-glycero-3-phospho-(1D-myo-inositol 4-phosphate) + ADP + H(+). With respect to regulation, repressed by PtdIns4P, adenosine and wortmannin, but stimulated by other negatively charged lipids such as PtdIns3P, PtdOH, and phosphatidyl-serine (PtdSer). Functionally, acts on phosphatidylinositol (PtdIns) in the first committed step in the production of the second messenger inositol-1,4,5,-trisphosphate. Can bind to phosphatidylinositol 4-monophosphate (PI-4-P or PtdIns4P), phosphatidylinositol 4,5-bisphosphate (PI-4,5-P2 or PtdIns4,5P2), and phosphatidic acid (PtdOH), but not to 3-phosphoinositides. May function upstream of the cold response phosphoinositide-dependent phospholipase C (PI-PLC) pathway. The chain is Phosphatidylinositol 4-kinase alpha 1 from Arabidopsis thaliana (Mouse-ear cress).